Here is a 161-residue protein sequence, read N- to C-terminus: RNA pyrophosphohydrolase (161 aa).

Residues 12-154 (PYRPGVGMMI…KRKLYQAVVK (143 aa)) form the Nudix hydrolase domain. Residues 46-67 (GGIVPGETPSIAAMREMLEEIG) carry the Nudix box motif.

It belongs to the Nudix hydrolase family. RppH subfamily. The cofactor is a divalent metal cation.

Accelerates the degradation of transcripts by removing pyrophosphate from the 5'-end of triphosphorylated RNA, leading to a more labile monophosphorylated state that can stimulate subsequent ribonuclease cleavage. This Rickettsia peacockii (strain Rustic) protein is RNA pyrophosphohydrolase.